The primary structure comprises 179 residues: Peptide deformylase 2 (179 aa).

Fe cation contacts are provided by Cys101 and His143. Glu144 is an active-site residue. His147 is a Fe cation binding site.

It belongs to the polypeptide deformylase family. The cofactor is Fe(2+).

The catalysed reaction is N-terminal N-formyl-L-methionyl-[peptide] + H2O = N-terminal L-methionyl-[peptide] + formate. Functionally, removes the formyl group from the N-terminal Met of newly synthesized proteins. Requires at least a dipeptide for an efficient rate of reaction. N-terminal L-methionine is a prerequisite for activity but the enzyme has broad specificity at other positions. The sequence is that of Peptide deformylase 2 from Pseudomonas syringae pv. tomato (strain ATCC BAA-871 / DC3000).